The chain runs to 117 residues: Large ribosomal subunit protein bL20c (117 aa).

It belongs to the bacterial ribosomal protein bL20 family.

Its subcellular location is the plastid. The protein resides in the chloroplast. Functionally, binds directly to 23S ribosomal RNA and is necessary for the in vitro assembly process of the 50S ribosomal subunit. It is not involved in the protein synthesizing functions of that subunit. The protein is Large ribosomal subunit protein bL20c of Olimarabidopsis pumila (Dwarf rocket).